The chain runs to 366 residues: tRNA 2-selenouridine synthase (366 aa).

The Rhodanese domain occupies 14-137 (LLENRPLIDV…IRSFLINTIE (124 aa)). Cys97 serves as the catalytic S-selanylcysteine intermediate.

Belongs to the SelU family. As to quaternary structure, monomer.

It catalyses the reaction 5-methylaminomethyl-2-thiouridine(34) in tRNA + selenophosphate + (2E)-geranyl diphosphate + H2O + H(+) = 5-methylaminomethyl-2-selenouridine(34) in tRNA + (2E)-thiogeraniol + phosphate + diphosphate. It carries out the reaction 5-methylaminomethyl-2-thiouridine(34) in tRNA + (2E)-geranyl diphosphate = 5-methylaminomethyl-S-(2E)-geranyl-thiouridine(34) in tRNA + diphosphate. The catalysed reaction is 5-methylaminomethyl-S-(2E)-geranyl-thiouridine(34) in tRNA + selenophosphate + H(+) = 5-methylaminomethyl-2-(Se-phospho)selenouridine(34) in tRNA + (2E)-thiogeraniol. The enzyme catalyses 5-methylaminomethyl-2-(Se-phospho)selenouridine(34) in tRNA + H2O = 5-methylaminomethyl-2-selenouridine(34) in tRNA + phosphate. Its function is as follows. Involved in the post-transcriptional modification of the uridine at the wobble position (U34) of tRNA(Lys), tRNA(Glu) and tRNA(Gln). Catalyzes the conversion of 2-thiouridine (S2U-RNA) to 2-selenouridine (Se2U-RNA). Acts in a two-step process involving geranylation of 2-thiouridine (S2U) to S-geranyl-2-thiouridine (geS2U) and subsequent selenation of the latter derivative to 2-selenouridine (Se2U) in the tRNA chain. The sequence is that of tRNA 2-selenouridine synthase from Shewanella frigidimarina (strain NCIMB 400).